The sequence spans 165 residues: Large ribosomal subunit protein uL10 (165 aa).

Belongs to the universal ribosomal protein uL10 family. In terms of assembly, part of the ribosomal stalk of the 50S ribosomal subunit. The N-terminus interacts with L11 and the large rRNA to form the base of the stalk. The C-terminus forms an elongated spine to which L12 dimers bind in a sequential fashion forming a multimeric L10(L12)X complex.

In terms of biological role, forms part of the ribosomal stalk, playing a central role in the interaction of the ribosome with GTP-bound translation factors. The sequence is that of Large ribosomal subunit protein uL10 from Hamiltonella defensa subsp. Acyrthosiphon pisum (strain 5AT).